The sequence spans 288 residues: Thiamine-monophosphate kinase (288 aa).

Mg(2+)-binding residues include aspartate 20, threonine 30, and aspartate 32. Residue aspartate 39 participates in substrate binding. Aspartate 60 and aspartate 107 together coordinate Mg(2+). Residues 106–107 (GD) and arginine 130 contribute to the ATP site. Residue aspartate 188 coordinates Mg(2+). Serine 190 contacts ATP. Aspartate 191 is a Mg(2+) binding site. Tryptophan 286 is a binding site for substrate.

Belongs to the thiamine-monophosphate kinase family.

The enzyme catalyses thiamine phosphate + ATP = thiamine diphosphate + ADP. It participates in cofactor biosynthesis; thiamine diphosphate biosynthesis; thiamine diphosphate from thiamine phosphate: step 1/1. In terms of biological role, catalyzes the ATP-dependent phosphorylation of thiamine-monophosphate (TMP) to form thiamine-pyrophosphate (TPP), the active form of vitamin B1. The protein is Thiamine-monophosphate kinase of Halobacterium salinarum (strain ATCC 700922 / JCM 11081 / NRC-1) (Halobacterium halobium).